The sequence spans 379 residues: Queuine tRNA-ribosyltransferase (379 aa).

The active-site Proton acceptor is Asp-94. Residues 94–98, Asp-148, Gln-191, and Gly-218 contribute to the substrate site; that span reads DSGGF. The tract at residues 249–255 is RNA binding; it reads GVGSPDS. The Nucleophile role is filled by Asp-268. An RNA binding; important for wobble base 34 recognition region spans residues 273-277; it reads TRIAR. The Zn(2+) site is built by Cys-306, Cys-308, Cys-311, and His-337.

The protein belongs to the queuine tRNA-ribosyltransferase family. In terms of assembly, homodimer. Within each dimer, one monomer is responsible for RNA recognition and catalysis, while the other monomer binds to the replacement base PreQ1. It depends on Zn(2+) as a cofactor.

The enzyme catalyses 7-aminomethyl-7-carbaguanine + guanosine(34) in tRNA = 7-aminomethyl-7-carbaguanosine(34) in tRNA + guanine. It participates in tRNA modification; tRNA-queuosine biosynthesis. Catalyzes the base-exchange of a guanine (G) residue with the queuine precursor 7-aminomethyl-7-deazaguanine (PreQ1) at position 34 (anticodon wobble position) in tRNAs with GU(N) anticodons (tRNA-Asp, -Asn, -His and -Tyr). Catalysis occurs through a double-displacement mechanism. The nucleophile active site attacks the C1' of nucleotide 34 to detach the guanine base from the RNA, forming a covalent enzyme-RNA intermediate. The proton acceptor active site deprotonates the incoming PreQ1, allowing a nucleophilic attack on the C1' of the ribose to form the product. After dissociation, two additional enzymatic reactions on the tRNA convert PreQ1 to queuine (Q), resulting in the hypermodified nucleoside queuosine (7-(((4,5-cis-dihydroxy-2-cyclopenten-1-yl)amino)methyl)-7-deazaguanosine). This chain is Queuine tRNA-ribosyltransferase, found in Bacillus cytotoxicus (strain DSM 22905 / CIP 110041 / 391-98 / NVH 391-98).